The sequence spans 632 residues: Phosphatidylinositol 3,4,5-trisphosphate 3-phosphatase and protein-tyrosine-phosphatase PTEN2B (632 aa).

Polar residues predominate over residues 1 to 12 (METDPANSSSKS). The interval 1 to 98 (METDPANSSS…RESPPSIFSS (98 aa)) is disordered. Positions 39–48 (SAEREAHEDS) are enriched in basic and acidic residues. A compositionally biased stretch (polar residues) spans 63 to 73 (MPASSTGSEPL). Over residues 87–98 (SPRESPPSIFSS) the composition is skewed to low complexity. Residues 189-368 (RRYQEGEFDL…KYYERVQNQF (180 aa)) enclose the Phosphatase tensin-type domain. The active-site Phosphocysteine intermediate is C307. The C2 tensin-type domain maps to 375–502 (ERRCMLRGFR…FHVEIVMIEP (128 aa)). A disordered region spans residues 504–603 (NSQPTKSKSD…SGHYNPIPNN (100 aa)). Residues 505–527 (SQPTKSKSDSTQQQSQSSSSADS) show a composition bias toward low complexity. Positions 535–549 (KDDDVFSDSDGEEEG) are enriched in acidic residues. S541 carries the phosphoserine modification. Positions 550 to 571 (NSQSYSTNEKTASSMHTTSKPH) are enriched in polar residues. Low complexity predominate over residues 584 to 594 (ANRSVTSSSSS).

It belongs to the PTEN phosphatase protein family. Expressed, at low levels, in seedlings, roots, stems, leaves, flowers and siliques. However, at protein level, not observed in older leaves, flowers and siliques.

The catalysed reaction is O-phospho-L-tyrosyl-[protein] + H2O = L-tyrosyl-[protein] + phosphate. The enzyme catalyses a 1,2-diacyl-sn-glycero-3-phospho-(1D-myo-inositol-3,4,5-trisphosphate) + H2O = a 1,2-diacyl-sn-glycero-3-phospho-(1D-myo-inositol-4,5-bisphosphate) + phosphate. Functionally, protein tyrosine phosphatase that also exhibits a weak lipid phosphatase activity towards PtdIns(3)P. The polypeptide is Phosphatidylinositol 3,4,5-trisphosphate 3-phosphatase and protein-tyrosine-phosphatase PTEN2B (Arabidopsis thaliana (Mouse-ear cress)).